The following is a 271-amino-acid chain: 3-methyl-2-oxobutanoate hydroxymethyltransferase (271 aa).

Aspartate 51 and aspartate 90 together coordinate Mg(2+). Residues aspartate 51 to serine 52, aspartate 90, and lysine 118 contribute to the 3-methyl-2-oxobutanoate site. Glutamate 120 provides a ligand contact to Mg(2+). Glutamate 186 functions as the Proton acceptor in the catalytic mechanism.

Belongs to the PanB family. As to quaternary structure, homodecamer; pentamer of dimers. The cofactor is Mg(2+).

The protein resides in the cytoplasm. The enzyme catalyses 3-methyl-2-oxobutanoate + (6R)-5,10-methylene-5,6,7,8-tetrahydrofolate + H2O = 2-dehydropantoate + (6S)-5,6,7,8-tetrahydrofolate. It functions in the pathway cofactor biosynthesis; (R)-pantothenate biosynthesis; (R)-pantoate from 3-methyl-2-oxobutanoate: step 1/2. Functionally, catalyzes the reversible reaction in which hydroxymethyl group from 5,10-methylenetetrahydrofolate is transferred onto alpha-ketoisovalerate to form ketopantoate. The chain is 3-methyl-2-oxobutanoate hydroxymethyltransferase from Xanthomonas euvesicatoria pv. vesicatoria (strain 85-10) (Xanthomonas campestris pv. vesicatoria).